The following is a 393-amino-acid chain: MVQPHDHKSASPQDTVTSVSIQLLLFVDDRPSSQENIEQIQEHLERLKSEYPYDLQVIEIQQQPHLVEYFRLVATPALVKIVPEPRQTLAGSNIVDQLNKWWPRWQCAIKEAQDAQKVHNETNNQGDGDSPLNSVGYSAELIRLSDELFRLKKEKEELAEQIKFKDQVLAMLAHDLRSPLTAASIAVETLELANNQPDSPRIVQLKEQLYQQTRKQFRIMNRLITDILQASKSINAQLQLQHTHLYLQPLCLEILKQMGDQFQEKSLKIEKDIPQDLPPVYADEELIRQVIVNLLDNAIKYTPEEGTITVSILHRTTQKVQVSICDTGPGIPEEKQDRIFEGHFRLKRDEGKEGYGLGLSLCRKIIRAHYGQIWVDSTINQGSCFHFTLPVFR.

Residues Met-171 to Arg-393 enclose the Histidine kinase domain. His-174 is subject to Phosphohistidine; by autocatalysis.

In terms of assembly, homooligomerizes. Interacts with KaiC. Participates in the KaiABC clock complex, whose core is composed of a KaiC homohexamer, 6 KaiB and up to 6 KaiA dimers. SasA and KaiB(fs) compete to bind to KaiC.

It catalyses the reaction ATP + protein L-histidine = ADP + protein N-phospho-L-histidine.. Functionally, member of the two-component regulatory system SasA/RpaA involved in genome-wide circadian gene expression. One of several clock output pathways. Participates in the Kai clock protein complex, the main circadian regulator in cyanobacteria, via its interaction with KaiC. KaiC enhances the autophosphorylation activity of SasA, which then transfers its phosphate group to RpaA to activate it. In addition to its output function, recruits fold-shifted KaiB (KaiB(fs)) to KaiC to cooperatively form the KaiB(6):KaiC(6) complex (independent of SasA kinase activity). Required for robustness of the circadian rhythm of gene expression and is involved in clock output, also required for adaptation to light/dark cycles. The protein is Adaptive-response sensory kinase SasA of Gloeothece citriformis (strain PCC 7424) (Cyanothece sp. (strain PCC 7424)).